The following is a 776-amino-acid chain: Kinesin-like protein KLP1 (776 aa).

The 331-residue stretch at 5 to 335 folds into the Kinesin motor domain; that stretch reads AVKVFVRTRP…LRFASRVRTL (331 aa). 91–98 contributes to the ATP binding site; sequence GQTGAGKT. Residues 348–371 are a coiled coil; it reads ALLLRRYERQIKELKAELAMRDTL. The disordered stretch occupies residues 441–535; it reads RRATEEGSGA…SNWGDAGPLS (95 aa). The segment covering 447-460 has biased composition (low complexity); that stretch reads GSGAAARGGDSAGP. Residues 579–657 adopt a coiled-coil conformation; that stretch reads ALADTKASIR…SLKSAREELE (79 aa). The globular stretch occupies residues 658-776; it reads PQIQAVAVAR…TQAVNRGLAR (119 aa).

Belongs to the TRAFAC class myosin-kinesin ATPase superfamily. Kinesin family.

It is found in the cytoplasm. Its subcellular location is the cytoskeleton. The protein localises to the flagellum axoneme. Its function is as follows. May play a role in rotation or twisting of the central pair microtubules of the flagella axoneme. This is Kinesin-like protein KLP1 (KLP1) from Chlamydomonas reinhardtii (Chlamydomonas smithii).